We begin with the raw amino-acid sequence, 366 residues long: Probable cyclin-dependent kinase 10 (366 aa).

In terms of domain architecture, Protein kinase spans 7 to 293; it reads FEKLDSIGEG…ASDAIKHPFF (287 aa). ATP is bound by residues 13–21 and lysine 36; that span reads IGEGTYGIV. The active-site Proton acceptor is the aspartate 132. Residues 315–358 show a composition bias toward low complexity; sequence FKNQNKKQNNNFNNFVQNNQTNQNNQTNQNNQTNQNNKTSQNNN. The interval 315–366 is disordered; sequence FKNQNKKQNNNFNNFVQNNQTNQNNQTNQNNQTNQNNKTSQNNNMDSYKYSK.

Belongs to the protein kinase superfamily. CMGC Ser/Thr protein kinase family. CDC2/CDKX subfamily.

It carries out the reaction L-seryl-[protein] + ATP = O-phospho-L-seryl-[protein] + ADP + H(+). The enzyme catalyses L-threonyl-[protein] + ATP = O-phospho-L-threonyl-[protein] + ADP + H(+). This Dictyostelium discoideum (Social amoeba) protein is Probable cyclin-dependent kinase 10 (cdk10).